The sequence spans 251 residues: Coproheme decarboxylase (251 aa).

Fe-coproporphyrin III contacts are provided by residues arginine 133, 147–151, histidine 174, glutamine 187, and serine 225; that span reads YPMSK. Tyrosine 147 is a catalytic residue.

The protein belongs to the ChdC family. Type 1 subfamily. Homopentamer. Homohexamer in solution. Fe-coproporphyrin III is required as a cofactor.

It carries out the reaction Fe-coproporphyrin III + 2 H2O2 + 2 H(+) = heme b + 2 CO2 + 4 H2O. The catalysed reaction is Fe-coproporphyrin III + H2O2 + H(+) = harderoheme III + CO2 + 2 H2O. It catalyses the reaction harderoheme III + H2O2 + H(+) = heme b + CO2 + 2 H2O. It participates in porphyrin-containing compound metabolism; protoheme biosynthesis. Involved in coproporphyrin-dependent heme b biosynthesis. Catalyzes the decarboxylation of Fe-coproporphyrin III (coproheme) to heme b (protoheme IX), the last step of the pathway. The reaction occurs in a stepwise manner with a three-propionate intermediate. This chain is Coproheme decarboxylase, found in Listeria monocytogenes serovar 1/2a (strain ATCC BAA-679 / EGD-e).